A 723-amino-acid chain; its full sequence is PX domain-containing protein EREL1 (723 aa).

Residues 1-12 (MMQRRSPPKHRH) show a composition bias toward basic residues. The segment at 1 to 26 (MMQRRSPPKHRHDGTSPLPLGMDWSP) is disordered. The region spanning 48–165 (YCVTIPSWIV…SFLELEAAAR (118 aa)) is the PX domain. Disordered regions lie at residues 169 to 193 (QDVDQNASDSNNDRSSTSSSPMVHP) and 209 to 230 (YGSDTAYETSEVGSPSVGQDDI). Residues 172–193 (DQNASDSNNDRSSTSSSPMVHP) show a composition bias toward low complexity. The segment covering 209–225 (YGSDTAYETSEVGSPSV) has biased composition (polar residues). Coiled-coil stretches lie at residues 401–474 (NERL…LRQK) and 503–555 (KHVL…LEKE). The disordered stretch occupies residues 698-723 (DVKTTEDVNEENSDEKDEASRETLKR). Positions 704–714 (DVNEENSDEKD) are enriched in acidic residues.

It is found in the cytoplasm. The protein localises to the cytosol. Its subcellular location is the endosome membrane. Functionally, acts as an effector of RABF2A and RABF2B. Involved in vacuolar transport of storage proteins. Regulates membrane trafficking to protein storage vacuoles (PSVs). Binds specifically to phosphatidylinositol 3-monophosphate (PtdIns3P). The protein is PX domain-containing protein EREL1 of Arabidopsis thaliana (Mouse-ear cress).